We begin with the raw amino-acid sequence, 325 residues long: Neisseria adhesin A (325 aa).

An N-terminal signal peptide occupies residues 1 to 23 (MKHFQSKVLTAAILAALSGSAMA). A head domain region spans residues 24 to 137 (DNPPPSTDEI…NTAAIGENKA (114 aa)). Residues 86 to 135 (LKEVLAQHDQSLADLTGTVDENSEALVKTAEVVNDISADVKANTAAIGEN) adopt a coiled-coil conformation. A coiled stalk domain region spans residues 139–231 (IAKKADQTAL…LASAEKSITE (93 aa)). The tract at residues 232 to 270 (HGTRLNGLDRTVSDLRKETRQGLAEQAALSGLFQPYNVG) is outer membrane translocation of the passenger domain. The next 4 beta stranded transmembrane spans lie at 270–280 (GRFNVTAAVGG), 284–295 (ESAVAIGTGFRF), 302–308 (KAGVAVG), and 314–325 (SAAYHVGVNYEW). The interval 271 to 325 (RFNVTAAVGGYKSESAVAIGTGFRFTENFAAKAGVAVGTSSGSSAAYHVGVNYEW) is translocator domain.

Belongs to the autotransporter-2 (AT-2) (TC 1.B.40) family. As to quaternary structure, homotrimer.

It is found in the cell surface. The protein localises to the cell outer membrane. In terms of biological role, an antigenic bacterial cell surface protein that adheres to and induces bacterial uptake by human epithelial cells. The polypeptide is Neisseria adhesin A (Neisseria meningitidis serogroup B).